The sequence spans 425 residues: Multifunctional CCA protein (425 aa).

ATP is bound by residues Gly8 and Arg11. CTP is bound by residues Gly8 and Arg11. Residues Asp21 and Asp23 each coordinate Mg(2+). Positions 91, 141, and 144 each coordinate ATP. Residues Arg91, Arg141, and Arg144 each coordinate CTP. In terms of domain architecture, HD spans 230-331 (TGVHLMMVLD…VRLLERCDAI (102 aa)).

This sequence belongs to the tRNA nucleotidyltransferase/poly(A) polymerase family. Bacterial CCA-adding enzyme type 1 subfamily. Monomer. Can also form homodimers and oligomers. The cofactor is Mg(2+). It depends on Ni(2+) as a cofactor.

It catalyses the reaction a tRNA precursor + 2 CTP + ATP = a tRNA with a 3' CCA end + 3 diphosphate. It carries out the reaction a tRNA with a 3' CCA end + 2 CTP + ATP = a tRNA with a 3' CCACCA end + 3 diphosphate. In terms of biological role, catalyzes the addition and repair of the essential 3'-terminal CCA sequence in tRNAs without using a nucleic acid template. Adds these three nucleotides in the order of C, C, and A to the tRNA nucleotide-73, using CTP and ATP as substrates and producing inorganic pyrophosphate. tRNA 3'-terminal CCA addition is required both for tRNA processing and repair. Also involved in tRNA surveillance by mediating tandem CCA addition to generate a CCACCA at the 3' terminus of unstable tRNAs. While stable tRNAs receive only 3'-terminal CCA, unstable tRNAs are marked with CCACCA and rapidly degraded. The polypeptide is Multifunctional CCA protein (Acidovorax sp. (strain JS42)).